A 716-amino-acid chain; its full sequence is ATP-dependent DNA helicase DinG (716 aa).

The 278-residue stretch at 17 to 294 (ALQEQIPDFI…TCMEQFRPKT (278 aa)) folds into the Helicase ATP-binding domain. 54–61 (APTGVGKT) is an ATP binding site. [4Fe-4S] cluster is bound at residue C120. Positions 131 to 134 (EPTQ) match the DEAH box motif. [4Fe-4S] cluster contacts are provided by C194, C199, and C205. Positions 248–251 (DEGH) match the DEAH box motif. A Helicase C-terminal domain is found at 517–698 (HIAEMAAFFR…VFPIEQPEVP (182 aa)).

It belongs to the helicase family. DinG subfamily. Type 1 sub-subfamily. The cofactor is [4Fe-4S] cluster.

The enzyme catalyses Couples ATP hydrolysis with the unwinding of duplex DNA at the replication fork by translocating in the 5'-3' direction. This creates two antiparallel DNA single strands (ssDNA). The leading ssDNA polymer is the template for DNA polymerase III holoenzyme which synthesizes a continuous strand.. The catalysed reaction is ATP + H2O = ADP + phosphate + H(+). Its function is as follows. DNA-dependent ATPase and 5'-3' DNA helicase. Unwinds D-loops, R-loops, forked DNA and G-quadruplex DNA. The polypeptide is ATP-dependent DNA helicase DinG (Escherichia coli O157:H7).